The primary structure comprises 726 residues: Beta-glucosidase cel3A (726 aa).

Positions 1-20 (MASRLVAGLQVLALAGTATA) are cleaved as a signal peptide. 2 N-linked (GlcNAc...) asparagine glycosylation sites follow: Asn-223 and Asn-592.

It belongs to the glycosyl hydrolase 3 family.

It is found in the secreted. The enzyme catalyses Hydrolysis of terminal, non-reducing beta-D-glucosyl residues with release of beta-D-glucose.. It functions in the pathway glycan metabolism; cellulose degradation. Its function is as follows. Beta-glucosidases are one of a number of cellulolytic enzymes involved in the degradation of cellulosic biomass. Catalyzes the last step releasing glucose from the inhibitory cellobiose. Has a broad substrate specificity but preferentially hydrolyzes highly polymerized 1,3- and 1,4-beta-glucans. This Pyricularia oryzae (strain 70-15 / ATCC MYA-4617 / FGSC 8958) (Rice blast fungus) protein is Beta-glucosidase cel3A.